A 354-amino-acid chain; its full sequence is ATPase GET3 (354 aa).

ATP is bound at residue 26 to 33; it reads KGGVGKTT. Residue Asp57 is part of the active site. 2 residues coordinate ATP: Glu245 and Asn272. Residues Cys285 and Cys288 each contribute to the Zn(2+) site.

Belongs to the arsA ATPase family. In terms of assembly, homodimer. Component of the Golgi to ER traffic (GET) complex, which is composed of GET1, GET2 and GET3. Within the complex, GET1 and GET2 form a heterotetramer which is stabilized by phosphatidylinositol binding and which binds to the GET3 homodimer. Interacts with the chloride channel protein GEF1.

The protein localises to the cytoplasm. It localises to the endoplasmic reticulum. The protein resides in the golgi apparatus. In terms of biological role, ATPase required for the post-translational delivery of tail-anchored (TA) proteins to the endoplasmic reticulum. Recognizes and selectively binds the transmembrane domain of TA proteins in the cytosol. This complex then targets to the endoplasmic reticulum by membrane-bound receptors GET1 and GET2, where the tail-anchored protein is released for insertion. This process is regulated by ATP binding and hydrolysis. ATP binding drives the homodimer towards the closed dimer state, facilitating recognition of newly synthesized TA membrane proteins. ATP hydrolysis is required for insertion. Subsequently, the homodimer reverts towards the open dimer state, lowering its affinity for the GET1-GET2 receptor, and returning it to the cytosol to initiate a new round of targeting. Cooperates with the HDEL receptor ERD2 to mediate the ATP-dependent retrieval of resident ER proteins that contain a C-terminal H-D-E-L retention signal from the Golgi to the ER. Involved in low-level resistance to the oxyanions arsenite and arsenate, and in heat tolerance. The protein is ATPase GET3 of Saccharomyces cerevisiae (strain RM11-1a) (Baker's yeast).